The chain runs to 101 residues: Apolipoprotein C-II (101 aa).

Positions 1 to 22 are cleaved as a signal peptide; that stretch reads MGTRYLLVLLLVLLVLGFEVQG. A lipid binding region spans residues 66-74; sequence TMDEKIRDI. A lipoprotein lipase cofactor region spans residues 78–101; that stretch reads STAAVSTYAGIFTDQLLSMLKGDS.

It belongs to the apolipoprotein C2 family. Proapolipoprotein C-II is synthesized as a sialic acid containing glycoprotein which is subsequently desialylated prior to its proteolytic processing. In terms of processing, proapolipoprotein C-II, the major form found in plasma undergoes proteolytic cleavage of its N-terminal hexapeptide to generate apolipoprotein C-II, which occurs as the minor form in plasma. As to expression, highly expressed in the liver. Moderately expressed in the ileum, jejunum and ovary.

It localises to the secreted. Component of chylomicrons, very low-density lipoproteins (VLDL), low-density lipoproteins (LDL), and high-density lipoproteins (HDL) in plasma. Plays an important role in lipoprotein metabolism as an activator of lipoprotein lipase. Both proapolipoprotein C-II and apolipoprotein C-II can activate lipoprotein lipase. This chain is Apolipoprotein C-II (APOC2), found in Canis lupus familiaris (Dog).